The following is a 373-amino-acid chain: Outer membrane protein C (373 aa).

The signal sequence occupies residues 1 to 21 (MKVKVLSLLVPALLVAGAANA). 5 beta stranded membrane passes run 34–42 (LYGKVDGLH), 54–63 (QTYMRLGFKG), 74–84 (YGQWEYQIQGN), 92–101 (SWTRVAFAGL), and 107–115 (GSFDYGRNY). The loop L3; may constrict the pore stretch occupies residues 116–133 (GVVYDVTSWTDVLPEFGG). Transmembrane regions (beta stranded) follow at residues 142–154 (MQQR…TYRS), 164–171 (LNFAVQYQ), 197–203 (VGGSITY), 208–215 (FGIGAAVS), 244–250 (YTGGLKY), 255–262 (IYLAAQYT), 272–288 (NLGW…VAQY), 294–301 (LRPSLAYL), 325–332 (VDVGATYY), 337–344 (MSTYVDYK), and 365–372 (VALGLVYQ).

The protein belongs to the Gram-negative porin family. Homotrimer. Forms mixed heterotrimers with OmpF and with PhoE; other mixed heterotrimers are also probable. In terms of assembly, (Microbial infection) Upon infection with phage Sf6 associates with the mature bacteriophage capsid. Was originally suggested to be within the bacteriophage capsid. This has been disproven.

The protein localises to the cell outer membrane. It localises to the extracellular vesicle. Functionally, forms pores that allow passive diffusion of small molecules across the outer membrane. (Microbial infection) Serves as a less-preferential secondary receptor during phage Sf6 infection; infection requires both lipopolysaccharide (LPS) and (in the absence of OmpA) OmpC can serve as the secondary receptor. This is Outer membrane protein C (ompC) from Shigella flexneri.